A 549-amino-acid polypeptide reads, in one-letter code: MNCHSVPLQGPVSFKDVTVDFTQEEWQRLDPAQKALYRDVMLENYCHFISVGFHITKPDMIRKLEQGEELWTERMFPSQSYLEDEEVLVKFRDYQDKPPTSIVIINHKKLIKERNNVYEKTLGNNHIISKTLFEYKSDGKVLKNISDFISRDINPVMGTLGDSSEWEESVLTSEQEKTHPVPTLYKQIGRNLSSSLELAQHQKTQIPEQRFECDECDSSFLMTEVAFPHDRAHRGVRDFNCSKDEIAFFEKSDLGIHPHNLMEKKCSTYNKYGKLLCRKSVFVMHPRSQVDERPFQCPYCGNSFRRKSYLIEHQRIHTGEKPYICSQCGKAFRQKTALTLHEKTHTDGKPYLCVDCGKSFRQKATLTRHHKTHTGEKAYECTQCGSAFGKKSYLIDHQRTHTGEKPYQCAECGKAFIQKTTLTVHQRTHTGEKPYMCSECGKSFCQKTTLTLHQRIHTGEKPYVCSDCGKSFRQKAILTVHYRIHTGEKSNGCPQCGKAFSRKSNLIRHQKTHTGEKPYECHECGKFFSCKSNLVAHQKTHKAETVRFQ.

Positions 1-105 are mediates interaction with TRIM28; that stretch reads MNCHSVPLQG…DKPPTSIVII (105 aa). 2 represses transcription regions span residues 10–51 and 75–210; these read GPVS…FISV and MFPS…PEQR. The KRAB domain occupies 12 to 83; it reads VSFKDVTVDF…RMFPSQSYLE (72 aa). C2H2-type zinc fingers lie at residues 211-233, 295-317, 323-345, 351-373, 379-401, 407-429, 435-457, 463-485, 491-513, and 519-541; these read FECD…DRAH, FQCP…QRIH, YICS…EKTH, YLCV…HKTH, YECT…QRTH, YQCA…QRTH, YMCS…QRIH, YVCS…YRIH, NGCP…QKTH, and YECH…QKTH. Residues 295–549 form a required for transcriptional repression activity; probably mediates sequence-specific DNA-binding region; sequence FQCPYCGNSF…THKAETVRFQ (255 aa).

It belongs to the krueppel C2H2-type zinc-finger protein family. Interacts with TRIM28; enhances the transcriptional repressor activity. Ubiquitously expressed with higher expression in lung, kidney and testis.

The protein localises to the nucleus. Functionally, functions as a sequence-specific transcriptional repressor. This Rattus norvegicus (Rat) protein is Zinc finger protein 382 (Znf382).